The following is a 307-amino-acid chain: NADH-ubiquinone oxidoreductase chain 2 (307 aa).

10 helical membrane passes run 1-21, 25-45, 58-78, 88-108, 119-139, 144-164, 193-213, 217-237, 250-270, and 287-307; these read MTLQSVLLGAMIILGPILSMT, WIIIWIGLEISLLGFVSYYML, YFLIQSVSSTVMLLNGLYIFV, FIFITMLMLKIGMFPLHFWII, IGIVGLLLKIVPMWILMHMGC, MLNLITMLSVTSMLFGALIGM, LFKYFITYGFSLVILLVFLYL, MSISLSLLSLSGLPPFMLFIG, LWFIVLVFAILSAVISLVYYL, and HYKMAMFLLVNVTFGMLLFLT.

This sequence belongs to the complex I subunit 2 family.

The protein localises to the mitochondrion inner membrane. The catalysed reaction is a ubiquinone + NADH + 5 H(+)(in) = a ubiquinol + NAD(+) + 4 H(+)(out). In terms of biological role, core subunit of the mitochondrial membrane respiratory chain NADH dehydrogenase (Complex I) that is believed to belong to the minimal assembly required for catalysis. Complex I functions in the transfer of electrons from NADH to the respiratory chain. The immediate electron acceptor for the enzyme is believed to be ubiquinone. The protein is NADH-ubiquinone oxidoreductase chain 2 (ND2) of Albinaria caerulea (Land snail).